We begin with the raw amino-acid sequence, 368 residues long: tRNA(Met) cytidine acetate ligase (368 aa).

Residues 7 to 20 (IAEF…HKYL), Gly-96, Asn-152, and Arg-175 contribute to the ATP site.

Belongs to the TmcAL family.

The protein resides in the cytoplasm. The enzyme catalyses cytidine(34) in elongator tRNA(Met) + acetate + ATP = N(4)-acetylcytidine(34) in elongator tRNA(Met) + AMP + diphosphate. In terms of biological role, catalyzes the formation of N(4)-acetylcytidine (ac(4)C) at the wobble position of elongator tRNA(Met), using acetate and ATP as substrates. First activates an acetate ion to form acetyladenylate (Ac-AMP) and then transfers the acetyl group to tRNA to form ac(4)C34. The sequence is that of tRNA(Met) cytidine acetate ligase from Streptococcus pyogenes serotype M5 (strain Manfredo).